The following is a 189-amino-acid chain: Lumazine protein (189 aa).

Lumazine-binding repeat units follow at residues 1–96 and 97–189; these read MFKG…LGKG and ALTG…SNEW.

6,7-dimethyl-8-(1-D-ribityl)lumazine serves as cofactor.

Its function is as follows. Antenna protein that modulates the color of the bioluminescence emission of the luciferase. In the presence of LumP, luciferase emission is shifted to higher energy values (shorter wavelength). This Photobacterium phosphoreum protein is Lumazine protein (luxL).